We begin with the raw amino-acid sequence, 486 residues long: Probable transporter MCH1 (486 aa).

The next 6 helical transmembrane spans lie at 31 to 51 (ISFF…LFSL), 69 to 89 (FIAS…GYLA), 91 to 111 (CYGP…SYFV), 132 to 152 (FGIC…SSLL), 164 to 184 (LAIS…SQLM), and 204 to 224 (FFGV…SVVS). The disordered stretch occupies residues 236-260 (EMEEADEESPLMTSRSRHSHHSCED). A helical transmembrane segment spans residues 280-300 (FINFLKDKSAWLLLASLILNI). An N-linked (GlcNAc...) asparagine glycan is attached at Asn322. 2 helical membrane-spanning segments follow: residues 327-348 (VSIM…SDYL) and 357-377 (ICRV…QFMV). Asn390 is a glycosylation site (N-linked (GlcNAc...) asparagine). Helical transmembrane passes span 395–415 (GGLF…DMMG) and 417–437 (TWGS…IFYG). A glycan (N-linked (GlcNAc...) asparagine) is linked at Asn457. A helical membrane pass occupies residues 458 to 478 (LTAVGLSVSLILIIIVWKGIW).

Belongs to the major facilitator superfamily.

It localises to the vacuole membrane. Probable transporter. This is Probable transporter MCH1 (MCH1) from Debaryomyces hansenii (strain ATCC 36239 / CBS 767 / BCRC 21394 / JCM 1990 / NBRC 0083 / IGC 2968) (Yeast).